Reading from the N-terminus, the 302-residue chain is N-acetylmuramic acid 6-phosphate etherase (302 aa).

The 164-residue stretch at 57-220 (VSEKLKNNGR…TTAVMIKLGK (164 aa)) folds into the SIS domain. The active-site Proton donor is Glu85. Residue Glu116 is part of the active site.

It belongs to the GCKR-like family. MurNAc-6-P etherase subfamily. As to quaternary structure, homodimer.

It carries out the reaction N-acetyl-D-muramate 6-phosphate + H2O = N-acetyl-D-glucosamine 6-phosphate + (R)-lactate. Its pathway is amino-sugar metabolism; N-acetylmuramate degradation. Functionally, specifically catalyzes the cleavage of the D-lactyl ether substituent of MurNAc 6-phosphate, producing GlcNAc 6-phosphate and D-lactate. In Clostridium acetobutylicum (strain ATCC 824 / DSM 792 / JCM 1419 / IAM 19013 / LMG 5710 / NBRC 13948 / NRRL B-527 / VKM B-1787 / 2291 / W), this protein is N-acetylmuramic acid 6-phosphate etherase.